We begin with the raw amino-acid sequence, 186 residues long: Elongation factor P (186 aa).

This sequence belongs to the elongation factor P family.

It is found in the cytoplasm. Its pathway is protein biosynthesis; polypeptide chain elongation. Functionally, involved in peptide bond synthesis. Stimulates efficient translation and peptide-bond synthesis on native or reconstituted 70S ribosomes in vitro. Probably functions indirectly by altering the affinity of the ribosome for aminoacyl-tRNA, thus increasing their reactivity as acceptors for peptidyl transferase. The sequence is that of Elongation factor P from Prochlorococcus marinus (strain MIT 9303).